Here is a 990-residue protein sequence, read N- to C-terminus: Insulin-degrading enzyme (990 aa).

Residue His81 participates in Zn(2+) binding. Glu84 acts as the Proton acceptor in catalysis. 2 residues coordinate Zn(2+): His85 and Glu162.

The protein belongs to the peptidase M16 family. Requires Zn(2+) as cofactor.

The enzyme catalyses Degradation of insulin, glucagon and other polypeptides. No action on proteins.. In terms of biological role, can cleave insulin and TGF-alpha. The sequence is that of Insulin-degrading enzyme (Ide) from Drosophila melanogaster (Fruit fly).